A 239-amino-acid polypeptide reads, in one-letter code: Ribonuclease PH (239 aa).

Residues Arg86 and 124 to 126 (GTR) each bind phosphate.

This sequence belongs to the RNase PH family. Homohexameric ring arranged as a trimer of dimers.

The catalysed reaction is tRNA(n+1) + phosphate = tRNA(n) + a ribonucleoside 5'-diphosphate. Phosphorolytic 3'-5' exoribonuclease that plays an important role in tRNA 3'-end maturation. Removes nucleotide residues following the 3'-CCA terminus of tRNAs; can also add nucleotides to the ends of RNA molecules by using nucleoside diphosphates as substrates, but this may not be physiologically important. Probably plays a role in initiation of 16S rRNA degradation (leading to ribosome degradation) during starvation. The protein is Ribonuclease PH of Anaeromyxobacter dehalogenans (strain 2CP-C).